A 156-amino-acid polypeptide reads, in one-letter code: Small ribosomal subunit protein uS7 (156 aa).

This sequence belongs to the universal ribosomal protein uS7 family. In terms of assembly, part of the 30S ribosomal subunit. Contacts proteins S9 and S11.

One of the primary rRNA binding proteins, it binds directly to 16S rRNA where it nucleates assembly of the head domain of the 30S subunit. Is located at the subunit interface close to the decoding center, probably blocks exit of the E-site tRNA. The polypeptide is Small ribosomal subunit protein uS7 (Halalkalibacterium halodurans (strain ATCC BAA-125 / DSM 18197 / FERM 7344 / JCM 9153 / C-125) (Bacillus halodurans)).